A 296-amino-acid chain; its full sequence is MLAPLPDVSLTDPAPSLSPLQWVGMQGIDLPVTVAEPGYWRELHARADVQVDLPAAHVKGIHMSRLYRQLDSLAEESALSALALRHALQAMIDSHLDCQSRSARMRLSLDLLAQRPALVTHDLSGWKSYPVRLDATLAQGVFQLRLQVGVGYSSTCPCSAALSRQLLEQGFLQAFAGEPLVEPDQVASWLRRHGTLATAHSQRSEAQVSVDLACDAPDLGILPLIARVEQALGTPVQTAVKRADEQAFAALNGRNLMFVEDAARRIQAALEGIYARPRVHVRHMESLHPHDAVAWA.

The protein belongs to the GTP cyclohydrolase IV family.

The catalysed reaction is GTP + H2O = 7,8-dihydroneopterin 3'-triphosphate + formate + H(+). It functions in the pathway cofactor biosynthesis; 7,8-dihydroneopterin triphosphate biosynthesis; 7,8-dihydroneopterin triphosphate from GTP: step 1/1. In terms of biological role, converts GTP to 7,8-dihydroneopterin triphosphate. This Delftia acidovorans (strain DSM 14801 / SPH-1) protein is GTP cyclohydrolase FolE2.